A 135-amino-acid polypeptide reads, in one-letter code: Lactoylglutathione lyase (135 aa).

The 125-residue stretch at 2-126 (QILHTMLRVG…DGYKIEFIEN (125 aa)) folds into the VOC domain. Ni(2+) is bound at residue histidine 5. Position 9 (arginine 9) interacts with substrate. Glutamate 56 serves as a coordination point for Ni(2+). Positions 60 and 74 each coordinate substrate. Residues histidine 74 and glutamate 122 each contribute to the Ni(2+) site. The Proton donor/acceptor role is filled by glutamate 122.

It belongs to the glyoxalase I family. Homodimer. Requires Ni(2+) as cofactor.

It catalyses the reaction (R)-S-lactoylglutathione = methylglyoxal + glutathione. It functions in the pathway secondary metabolite metabolism; methylglyoxal degradation; (R)-lactate from methylglyoxal: step 1/2. In terms of biological role, catalyzes the conversion of hemimercaptal, formed from methylglyoxal and glutathione, to S-lactoylglutathione. The sequence is that of Lactoylglutathione lyase (gloA) from Haemophilus influenzae (strain ATCC 51907 / DSM 11121 / KW20 / Rd).